A 414-amino-acid chain; its full sequence is Serine/threonine transporter SstT (414 aa).

The next 8 membrane-spanning stretches (helical) occupy residues 22–42 (GLVLGIVVALISAPLQETIGF), 54–74 (IFVKALRAVAPILIFFLVMAA), 89–109 (IIVLYLLGTFLAAFVAVIAGF), 148–168 (AIFKANFIGVLAWSIGLGLAL), 189–209 (IVHVIISFAPFGVFGLVAETL), 223–243 (LLAVLIGTMLFTAFVVNPILV), 305–325 (MAGAAITITILTLAAVHTLGL), and 337–357 (IVAALCACGASGVAGGSLLLI).

This sequence belongs to the dicarboxylate/amino acid:cation symporter (DAACS) (TC 2.A.23) family.

The protein resides in the cell inner membrane. It catalyses the reaction L-serine(in) + Na(+)(in) = L-serine(out) + Na(+)(out). The enzyme catalyses L-threonine(in) + Na(+)(in) = L-threonine(out) + Na(+)(out). Involved in the import of serine and threonine into the cell, with the concomitant import of sodium (symport system). This Haemophilus influenzae (strain PittEE) protein is Serine/threonine transporter SstT.